The following is a 466-amino-acid chain: Asparagine--tRNA ligase (466 aa).

The protein belongs to the class-II aminoacyl-tRNA synthetase family. Homodimer.

Its subcellular location is the cytoplasm. The catalysed reaction is tRNA(Asn) + L-asparagine + ATP = L-asparaginyl-tRNA(Asn) + AMP + diphosphate + H(+). In Serratia proteamaculans (strain 568), this protein is Asparagine--tRNA ligase.